Here is a 340-residue protein sequence, read N- to C-terminus: UDP-N-acetylglucosamine--N-acetylmuramyl-(pentapeptide) pyrophosphoryl-undecaprenol N-acetylglucosamine transferase (340 aa).

Residues 10-12, N110, S171, and Q272 contribute to the UDP-N-acetyl-alpha-D-glucosamine site; that span reads TGG.

Belongs to the glycosyltransferase 28 family. MurG subfamily.

It is found in the cell membrane. It carries out the reaction di-trans,octa-cis-undecaprenyl diphospho-N-acetyl-alpha-D-muramoyl-L-alanyl-D-glutamyl-meso-2,6-diaminopimeloyl-D-alanyl-D-alanine + UDP-N-acetyl-alpha-D-glucosamine = di-trans,octa-cis-undecaprenyl diphospho-[N-acetyl-alpha-D-glucosaminyl-(1-&gt;4)]-N-acetyl-alpha-D-muramoyl-L-alanyl-D-glutamyl-meso-2,6-diaminopimeloyl-D-alanyl-D-alanine + UDP + H(+). Its pathway is cell wall biogenesis; peptidoglycan biosynthesis. Cell wall formation. Catalyzes the transfer of a GlcNAc subunit on undecaprenyl-pyrophosphoryl-MurNAc-pentapeptide (lipid intermediate I) to form undecaprenyl-pyrophosphoryl-MurNAc-(pentapeptide)GlcNAc (lipid intermediate II). This chain is UDP-N-acetylglucosamine--N-acetylmuramyl-(pentapeptide) pyrophosphoryl-undecaprenol N-acetylglucosamine transferase, found in Wolbachia pipientis subsp. Culex pipiens (strain wPip).